A 63-amino-acid chain; its full sequence is Large ribosomal subunit protein bL35 (63 aa).

A disordered region spans residues 24–44 (RAKAYRSHRATGKTTKQKRQL).

It belongs to the bacterial ribosomal protein bL35 family.

The polypeptide is Large ribosomal subunit protein bL35 (Mycoplasma mycoides subsp. mycoides SC (strain CCUG 32753 / NCTC 10114 / PG1)).